The sequence spans 104 residues: Large ribosomal subunit protein bL21 (104 aa).

Belongs to the bacterial ribosomal protein bL21 family. Part of the 50S ribosomal subunit. Contacts protein L20.

This protein binds to 23S rRNA in the presence of protein L20. The polypeptide is Large ribosomal subunit protein bL21 (Moorella thermoacetica (strain ATCC 39073 / JCM 9320)).